The primary structure comprises 183 residues: (2E)-enoyl-[ACP] glycyltransferase (183 aa).

It belongs to the FcoT family.

The enzyme catalyses a (3R)-3-[(carboxymethyl)amino]fatty acid + holo-[ACP] + H(+) = a (2E)-enoyl-[ACP] + glycine + H2O. The catalysed reaction is (3R)-3-[(carboxylmethyl)amino]decanoate + holo-[ACP] + H(+) = (2E)-decenoyl-[ACP] + glycine + H2O. It carries out the reaction a fatty acyl-CoA + H2O = a fatty acid + CoA + H(+). Its function is as follows. Involved in the biosynthesis of a unique class of isonitrile lipopeptides (INLPs) that seem to play a role in metal acquisition. Catalyzes a Michael addition of glycine to the beta-position of an alpha,beta-unsaturated fatty acyl-[ACP], producing a (3R)-3-[(carboxymethyl)amino]fatty acid. Acts on the (2E)-decenoyl moiety loaded on the acyl-carrier protein (ACP) BQ2027_MB0103, forming the product (3R)-3-[(carboxymethyl)amino]decanoate released from the ACP. Displays thioesterase activity with a preference for long chain fatty acyl groups. This is (2E)-enoyl-[ACP] glycyltransferase from Mycobacterium bovis (strain ATCC BAA-935 / AF2122/97).